Reading from the N-terminus, the 586-residue chain is Exopolysaccharide phosphotransferase SCO6023 (586 aa).

This sequence belongs to the stealth family.

The sequence is that of Exopolysaccharide phosphotransferase SCO6023 from Streptomyces coelicolor (strain ATCC BAA-471 / A3(2) / M145).